A 77-amino-acid chain; its full sequence is uncharacterized protein (77 aa).

2 consecutive transmembrane segments (helical) span residues valine 22–glycine 42 and leucine 44–glycine 64.

It localises to the cell membrane. This is an uncharacterized protein from Methanocaldococcus jannaschii (strain ATCC 43067 / DSM 2661 / JAL-1 / JCM 10045 / NBRC 100440) (Methanococcus jannaschii).